Reading from the N-terminus, the 214-residue chain is Attacin (214 aa).

A signal peptide spans 1–19 (MSKSVALLLLCACLASGRH). Positions 20-26 (VPTRARR) are excised as a propeptide.

This sequence belongs to the attacin/sarcotoxin-2 family. Highest expression in fat body and hemocytes and to a much lesser extent in Malpighian tubules, silk gland and midgut.

It localises to the secreted. Hemolymph antibacterial protein. Has a wide spectrum of activity against both Gram-positive and Gram-negative bacteria. The sequence is that of Attacin from Bombyx mori (Silk moth).